A 497-amino-acid polypeptide reads, in one-letter code: Validamine 7-phosphate valienyltransferase (497 aa).

Aspartate 158 lines the GDP-valienol pocket. Position 182 (histidine 182) interacts with validamine 7-phosphate. Residues arginine 290, lysine 295, arginine 321, 325–326, 361–362, and threonine 366 contribute to the GDP-valienol site; these read NR and ND. Residue 383–386 participates in validamine 7-phosphate binding; it reads DGQN. Residues 387-388 and glutamate 391 each bind GDP-valienol; that span reads LS.

The protein belongs to the glycosyltransferase 20 family. Homodimer.

The catalysed reaction is validamine 7-phosphate + GDP-valienol = validoxylamine A 7'-phosphate + GDP + H(+). In terms of biological role, involved in the biosynthesis of the antifungal agent validamycin A. Catalyzes the condensation between GDP-valienol and validamine 7-phosphate via a nonglycosidic C-N bond formation to yield validoxylamine A 7'-phosphate. This Streptomyces hygroscopicus subsp. limoneus protein is Validamine 7-phosphate valienyltransferase.